Reading from the N-terminus, the 278-residue chain is Large ribosomal subunit protein uL2 (278 aa).

Disordered stretches follow at residues 1 to 20 (MGIR…SVSD), 25 to 58 (TRST…GGGH), and 223 to 278 (GVVM…GKKR). Over residues 37–58 (LHGKGGRNAHGRITTRHKGGGH) the composition is skewed to basic residues. A compositionally biased stretch (basic and acidic residues) spans 253–268 (PEGRTRKPNKPSDKLI). Over residues 269–278 (VRRRRTGKKR) the composition is skewed to basic residues.

It belongs to the universal ribosomal protein uL2 family. In terms of assembly, part of the 50S ribosomal subunit. Forms a bridge to the 30S subunit in the 70S ribosome.

In terms of biological role, one of the primary rRNA binding proteins. Required for association of the 30S and 50S subunits to form the 70S ribosome, for tRNA binding and peptide bond formation. It has been suggested to have peptidyltransferase activity; this is somewhat controversial. Makes several contacts with the 16S rRNA in the 70S ribosome. This Mycolicibacterium smegmatis (strain ATCC 700084 / mc(2)155) (Mycobacterium smegmatis) protein is Large ribosomal subunit protein uL2.